We begin with the raw amino-acid sequence, 364 residues long: 3-dehydroquinate synthase (364 aa).

Residues 75 to 80 (DGEQYK), 109 to 113 (GVIGD), 133 to 134 (TT), Lys-146, Lys-155, and 173 to 176 (TLDT) contribute to the NAD(+) site. Zn(2+)-binding residues include Glu-188, His-251, and His-268.

It belongs to the sugar phosphate cyclases superfamily. Dehydroquinate synthase family. It depends on Co(2+) as a cofactor. Requires Zn(2+) as cofactor. NAD(+) is required as a cofactor.

It is found in the cytoplasm. The enzyme catalyses 7-phospho-2-dehydro-3-deoxy-D-arabino-heptonate = 3-dehydroquinate + phosphate. The protein operates within metabolic intermediate biosynthesis; chorismate biosynthesis; chorismate from D-erythrose 4-phosphate and phosphoenolpyruvate: step 2/7. In terms of biological role, catalyzes the conversion of 3-deoxy-D-arabino-heptulosonate 7-phosphate (DAHP) to dehydroquinate (DHQ). This is 3-dehydroquinate synthase from Dechloromonas aromatica (strain RCB).